The sequence spans 275 residues: Large ribosomal subunit protein uL2 (275 aa).

Positions 223–275 are disordered; it reads VAMNPVDHPHGGGEGRTSGGRHPVSPWGQPTKGYKTRSNKRTDKYIVRRRNKK.

This sequence belongs to the universal ribosomal protein uL2 family. Part of the 50S ribosomal subunit. Forms a bridge to the 30S subunit in the 70S ribosome.

Functionally, one of the primary rRNA binding proteins. Required for association of the 30S and 50S subunits to form the 70S ribosome, for tRNA binding and peptide bond formation. It has been suggested to have peptidyltransferase activity; this is somewhat controversial. Makes several contacts with the 16S rRNA in the 70S ribosome. In Shewanella pealeana (strain ATCC 700345 / ANG-SQ1), this protein is Large ribosomal subunit protein uL2.